The primary structure comprises 86 residues: Small ribosomal subunit protein bS20 (86 aa).

The protein belongs to the bacterial ribosomal protein bS20 family.

Its function is as follows. Binds directly to 16S ribosomal RNA. The chain is Small ribosomal subunit protein bS20 from Aliarcobacter butzleri (strain RM4018) (Arcobacter butzleri).